A 115-amino-acid polypeptide reads, in one-letter code: Mediator of RNA polymerase II transcription subunit 9 (115 aa).

The interval 1–31 (MATGGTVRPAEEPEEEEEEEDEAVEEEEEED) is disordered. A compositionally biased stretch (acidic residues) spans 12 to 31 (EPEEEEEEEDEAVEEEEEED). A coiled-coil region spans residues 31-107 (DYTFLPLVHD…SELLQKYKSL (77 aa)).

It belongs to the Mediator complex subunit 9 family. As to quaternary structure, component of the Mediator complex.

The protein resides in the nucleus. In terms of biological role, component of the Mediator complex, a coactivator involved in the regulated transcription of nearly all RNA polymerase II-dependent genes. Mediator functions as a bridge to convey information from gene-specific regulatory proteins to the basal RNA polymerase II transcription machinery. Mediator is recruited to promoters by direct interactions with regulatory proteins and serves as a scaffold for the assembly of a functional preinitiation complex with RNA polymerase II and the general transcription factors. The sequence is that of Mediator of RNA polymerase II transcription subunit 9 (med9) from Xenopus laevis (African clawed frog).